Here is a 473-residue protein sequence, read N- to C-terminus: Glutathione reductase, mitochondrial (473 aa).

Residues serine 30 and glycine 31 each coordinate FAD. Serine 30 is a glutathione binding site. Position 37 (arginine 37) interacts with glutathione. Positions 50, 57, 58, and 66 each coordinate FAD. A disulfide bridge links cysteine 58 with cysteine 63. Residue tyrosine 114 coordinates glutathione. Alanine 130 is a binding site for FAD. The NADP(+) site is built by alanine 190, isoleucine 193, glutamate 196, arginine 213, arginine 219, and glycine 279. Residue aspartate 320 coordinates FAD. Leucine 326 is an NADP(+) binding site. Threonine 328 contributes to the FAD binding site. Position 336 (arginine 336) interacts with glutathione. Valine 359 lines the NADP(+) pocket. FAD is bound at residue histidine 456. Histidine 456 serves as the catalytic Proton acceptor.

This sequence belongs to the class-I pyridine nucleotide-disulfide oxidoreductase family. FAD is required as a cofactor. In terms of tissue distribution, expressed at all larval stages and in adults in intestine, vulva muscle, pharynx and some cells in the tail.

The protein resides in the cytoplasm. Its subcellular location is the mitochondrion. The catalysed reaction is 2 glutathione + NADP(+) = glutathione disulfide + NADPH + H(+). In terms of biological role, catalyzes the reduction of glutathione disulfide (GSSG) to reduced glutathione (GSH). Constitutes the major mechanism to maintain a high GSH:GSSG ratio in the cytosol. Involved in resistance to oxidative stress and starvation. Together with thioredoxin reductase txtr-1, required for the reduction of disulfide groups in the cuticle during molting. This is Glutathione reductase, mitochondrial from Caenorhabditis elegans.